The following is a 205-amino-acid chain: Thymidylate kinase (205 aa).

11–18 provides a ligand contact to ATP; it reads GLDKSGKT.

This sequence belongs to the thymidylate kinase family. As to quaternary structure, homodimer; the dimer arrangement is orthogonal and not antiparallel as in human enzyme.

It catalyses the reaction dTMP + ATP = dTDP + ADP. It functions in the pathway pyrimidine metabolism; dTTP biosynthesis. In terms of biological role, poxvirus TMP kinase is able to phosphorylate dTMP, dUMP and also dGMP from any purine and pyrimidine nucleoside triphosphate. The large substrate specificity is explained by the presence of a canal connecting the edge of the dimer interface to the TMP base binding pocket, canal not found in the human homolog. The protein is Thymidylate kinase (OPG178) of Homo sapiens (Human).